The chain runs to 343 residues: Probable potassium channel protein 2 (343 aa).

Over 1–7 (METSKKL) the chain is Cytoplasmic. Residues 8–28 (VIVAVLSITLILTYAYLISII) form a helical membrane-spanning segment. At 29–61 (EGVDYFTALYFSVITITTTGYGDFTPKTFLGRT) the chain is on the extracellular side. The short motif at 46–51 (TTGYGD) is the Selectivity filter element. A helical membrane pass occupies residues 62 to 82 (LTVVYLCVGVGIVMYLFSLIA). At 83 to 343 (EFIVEGKFEE…NLVKKKKKKL (261 aa)) the chain is on the cytoplasmic side. The RCK N-terminal domain occupies 107 to 227 (KDHYIICGYG…KIAGANRVVS (121 aa)). In terms of domain architecture, RCK C-terminal spans 253-338 (IKIAKDEYEE…LKYLENLVKK (86 aa)).

Its subcellular location is the cell membrane. Its function is as follows. Probable potassium channel protein. This Methanocaldococcus jannaschii (strain ATCC 43067 / DSM 2661 / JAL-1 / JCM 10045 / NBRC 100440) (Methanococcus jannaschii) protein is Probable potassium channel protein 2.